The chain runs to 465 residues: ATP-dependent rRNA helicase rrp3 (465 aa).

The tract at residues 1 to 46 (MSALKKRKITEKQPETNSDSEAESVSSRGSAKDETQTSGEEPAPAK) is disordered. The segment covering 15–29 (ETNSDSEAESVSSRG) has biased composition (polar residues). Residues 46–74 (KSFKELGIIDQLCEACENMGYKAPTPIQS) carry the Q motif motif. Positions 77-248 (IPLALEGRDV…RASLSNPVRV (172 aa)) constitute a Helicase ATP-binding domain. An ATP-binding site is contributed by 90–97 (AETGSGKT). A DEAD box motif is present at residues 196 to 199 (DEAD). The 145-residue stretch at 275–419 (YLVYLLNEFA…EYQVEKDEVM (145 aa)) folds into the Helicase C-terminal domain. The tract at residues 436-465 (MKSFDEKKGARGKKFGKGKRSRDDMDQEEG) is disordered. The span at 445–455 (ARGKKFGKGKR) shows a compositional bias: basic residues.

It belongs to the DEAD box helicase family. DDX47/RRP3 subfamily. As to quaternary structure, interacts with the SSU processome.

The protein resides in the nucleus. The catalysed reaction is ATP + H2O = ADP + phosphate + H(+). Functionally, ATP-dependent rRNA helicase required for pre-ribosomal RNA processing. Involved in the maturation of the 35S-pre-rRNA and to its cleavage to mature 18S rRNA. This Emericella nidulans (strain FGSC A4 / ATCC 38163 / CBS 112.46 / NRRL 194 / M139) (Aspergillus nidulans) protein is ATP-dependent rRNA helicase rrp3.